A 159-amino-acid chain; its full sequence is Sperm acrosome-associated protein 5 (159 aa).

A signal peptide spans 1–21 (MKAWGTVVVTLATLMVVTVDA). A C-type lysozyme domain is found at 22–150 (KIYERCELAA…SEWLKGCDMH (129 aa)). 4 disulfides stabilise this stretch: C27–C147, C51–C135, C85–C100, and C96–C114. Residue E56 is part of the active site.

Belongs to the glycosyl hydrolase 22 family.

Its subcellular location is the secreted. The enzyme catalyses Hydrolysis of (1-&gt;4)-beta-linkages between N-acetylmuramic acid and N-acetyl-D-glucosamine residues in a peptidoglycan and between N-acetyl-D-glucosamine residues in chitodextrins.. In Homo sapiens (Human), this protein is Sperm acrosome-associated protein 5 (SPACA5).